Here is a 72-residue protein sequence, read N- to C-terminus: Gene 35 protein (72 aa).

The sequence is that of Gene 35 protein (35) from Mycobacterium phage L5 (Mycobacteriophage L5).